The chain runs to 353 residues: UDP-3-O-acylglucosamine N-acyltransferase (353 aa).

Residue H246 is the Proton acceptor of the active site.

The protein belongs to the transferase hexapeptide repeat family. LpxD subfamily. In terms of assembly, homotrimer.

It catalyses the reaction a UDP-3-O-[(3R)-3-hydroxyacyl]-alpha-D-glucosamine + a (3R)-hydroxyacyl-[ACP] = a UDP-2-N,3-O-bis[(3R)-3-hydroxyacyl]-alpha-D-glucosamine + holo-[ACP] + H(+). It functions in the pathway bacterial outer membrane biogenesis; LPS lipid A biosynthesis. Functionally, catalyzes the N-acylation of UDP-3-O-acylglucosamine using 3-hydroxyacyl-ACP as the acyl donor. Is involved in the biosynthesis of lipid A, a phosphorylated glycolipid that anchors the lipopolysaccharide to the outer membrane of the cell. The protein is UDP-3-O-acylglucosamine N-acyltransferase of Chlorobaculum tepidum (strain ATCC 49652 / DSM 12025 / NBRC 103806 / TLS) (Chlorobium tepidum).